A 764-amino-acid polypeptide reads, in one-letter code: Mitogen-activated protein kinase kinase kinase 1b (764 aa).

Disordered stretches follow at residues 1–81 (MVEE…IQQQ), 120–260 (KSIA…TATR), 325–348 (PNLAEEAESSAKPESSAIPDSSAM), and 360–392 (VPELSAKPESNAKPESEPEQDSSVEARTEHYGS). Residues 14-30 (GSWGSGEDGGSSHGGKG) show a composition bias toward gly residues. 2 stretches are compositionally biased toward low complexity: residues 60-76 (VHSTSSSGSRRNPLSKS) and 125-135 (SQPLSSPSLSQ). A compositionally biased stretch (basic and acidic residues) spans 136–145 (EHGEASHSND). Residues 184-201 (YVNSQPQNHYGRKNSPSQ) show a composition bias toward polar residues. Positions 431-684 (WFKGDFIGSG…CDMLLTHPFI (254 aa)) constitute a Protein kinase domain. ATP-binding positions include 437-445 (IGSGTFGSV) and lysine 459. Aspartate 554 functions as the Proton acceptor in the catalytic mechanism. Residues 706 to 764 (EERSIDVSESPSIATSSQSGSSPSVAGDAVSPASVAVRPRSMRTLRSEFSMSSPESIAS) form a disordered region. Low complexity predominate over residues 715 to 729 (SPSIATSSQSGSSPS). Over residues 752–764 (SEFSMSSPESIAS) the composition is skewed to polar residues.

This sequence belongs to the protein kinase superfamily. STE Ser/Thr protein kinase family. MAP kinase kinase kinase subfamily.

The protein localises to the cell membrane. It catalyses the reaction L-seryl-[protein] + ATP = O-phospho-L-seryl-[protein] + ADP + H(+). The enzyme catalyses L-threonyl-[protein] + ATP = O-phospho-L-threonyl-[protein] + ADP + H(+). Its function is as follows. The CERK1, MEKK1a/b, MKK1a/b/c and MPK4a/b proteins are involved in pathogen defense. The pathway induces rapid growth inhibition, cell wall depositions and accumulation of defense-related transcripts. This protein is required for responses to chitin and acts redundantly with MEKK1a. The polypeptide is Mitogen-activated protein kinase kinase kinase 1b (MEKK1b) (Physcomitrium patens (Spreading-leaved earth moss)).